We begin with the raw amino-acid sequence, 497 residues long: Indoleacetaldoxime dehydratase (497 aa).

The helical transmembrane segment at 2-20 (EMILSISLCLTTLITLLLL) threads the bilayer. Heme is bound at residue C439.

Belongs to the cytochrome P450 family.

It is found in the membrane. It carries out the reaction (E)-(indol-3-yl)acetaldehyde oxime = (indol-3-yl)acetonitrile + H2O. Involved in the biosynthesis of the indole-derived phytoalexin camalexin. Catalyzes the conversion of indole-3-acetaldoxime to indole-3-acetonitrile. Required for resistance to A.brassicicola and B.cinerea. The chain is Indoleacetaldoxime dehydratase (CYP71A13) from Arabidopsis thaliana (Mouse-ear cress).